A 158-amino-acid chain; its full sequence is Large ribosomal subunit protein uL11 (158 aa).

It belongs to the universal ribosomal protein uL11 family. In terms of assembly, part of the ribosomal stalk of the 50S ribosomal subunit. Interacts with L10 and the large rRNA to form the base of the stalk. L10 forms an elongated spine to which L12 dimers bind in a sequential fashion forming a multimeric L10(L12)X complex.

Forms part of the ribosomal stalk which helps the ribosome interact with GTP-bound translation factors. The polypeptide is Large ribosomal subunit protein uL11 (Methanoregula boonei (strain DSM 21154 / JCM 14090 / 6A8)).